Reading from the N-terminus, the 401-residue chain is Probable 2,3-bisphosphoglycerate-independent phosphoglycerate mutase (401 aa).

Belongs to the BPG-independent phosphoglycerate mutase family. A-PGAM subfamily.

The catalysed reaction is (2R)-2-phosphoglycerate = (2R)-3-phosphoglycerate. It functions in the pathway carbohydrate degradation; glycolysis; pyruvate from D-glyceraldehyde 3-phosphate: step 3/5. In terms of biological role, catalyzes the interconversion of 2-phosphoglycerate and 3-phosphoglycerate. In Thermotoga maritima (strain ATCC 43589 / DSM 3109 / JCM 10099 / NBRC 100826 / MSB8), this protein is Probable 2,3-bisphosphoglycerate-independent phosphoglycerate mutase.